The following is a 306-amino-acid chain: Replication termination factor 2 (306 aa).

Positions 192–306 are disordered; sequence RAKLEKKTKK…HWVTHTSYCF (115 aa). A compositionally biased stretch (basic and acidic residues) spans 226-240; the sequence is GKSEEADPDPREKKS. S287 bears the Phosphoserine mark.

This sequence belongs to the rtf2 family. In terms of assembly, interacts with DDI2; probably also interacts with DDI1. Undergoes proteasomal degradation, via DDI1 and DDI2. Removal from stalled replisomes and degradation are required for genome stability.

Its subcellular location is the chromosome. In terms of biological role, replication termination factor which is a component of the elongating replisome. Required for ATR pathway signaling upon DNA damage and has a positive activity during DNA replication. Might function to facilitate fork pausing at replication fork barriers like the rDNA. May be globally required to stimulate ATR signaling after the fork stalls or encounters a lesion. Interacts with nascent DNA. The polypeptide is Replication termination factor 2 (Rattus norvegicus (Rat)).